We begin with the raw amino-acid sequence, 317 residues long: uncharacterized protein (317 aa).

This is an uncharacterized protein from Lactuca sativa (Garden lettuce).